A 456-amino-acid polypeptide reads, in one-letter code: Carnosine N-methyltransferase unmet (456 aa).

Arginine 154, glycine 195, glutamate 216, aspartate 282, phenylalanine 283, and cysteine 299 together coordinate S-adenosyl-L-methionine. Carnosine contacts are provided by aspartate 303, histidine 334, and tyrosine 385. Over residues 402 to 418 (RGKRKASREPHDLIVRE) the composition is skewed to basic and acidic residues. The interval 402 to 456 (RGKRKASREPHDLIVREDSEEEGEQQPERNETEEKQQLKPLATANCETEIKEQPS) is disordered. Residues serine 408 and serine 420 each carry the phosphoserine modification. Residues 427–438 (QPERNETEEKQQ) show a composition bias toward basic and acidic residues.

The protein belongs to the carnosine N-methyltransferase family. As to quaternary structure, associates with the GATOR2 complex; the interaction is probably direct and is inhibited by S-adenosyl-L-methionine binding. Associates with the GATOR1 complex; the interaction is probably indirect and mediated by the GATOR2 complex.

The enzyme catalyses carnosine + S-adenosyl-L-methionine = anserine + S-adenosyl-L-homocysteine + H(+). In terms of biological role, S-adenosyl-L-methionine-binding protein that acts as a sensor to signal methionine availability to the mTORC1 signaling pathway. Associates with the GATOR2 complex in the absence of methionine to inhibit mTORC1 signaling, but dissociates in the presence of the methionine derivative S-adenosyl-L-methionine; S-adenosyl-L-homocysteine binding does not induce dissociation. Required for mTORC1 pathway response to methionine starvation. Exerts a protective function on developing egg chambers by inhibiting mTORC1 signaling under starvation conditions. May also function as a N-methyltransferase that mediates the formation of anserine (beta-alanyl-N(Pi)-methyl-L-histidine) from carnosine. It is unclear whether this protein has retained N-methyltransferase activity or if it is an evolutionary intermediate whose substrate binding ability has been co-opted to function as a nutrient sensor for mTORC1 signaling. The chain is Carnosine N-methyltransferase unmet from Drosophila melanogaster (Fruit fly).